We begin with the raw amino-acid sequence, 358 residues long: Golgi-resident adenosine 3',5'-bisphosphate 3'-phosphatase (358 aa).

Met1 is subject to N-acetylmethionine. Topologically, residues 1–12 (MAPMGIRLSPLG) are cytoplasmic. Residues 13-33 (VAVFCLLGLGVLYHLYSGFLA) form a helical membrane-spanning segment. Residues 34–358 (GRFSLFGLGG…KLPDLEKMGH (325 aa)) are Lumenal-facing. The tract at residues 85 to 106 (RESNVLHEKSKGKTREGADDKM) is disordered. Asp110 serves as the catalytic Proton acceptor. Mg(2+) contacts are provided by Glu133, Asp174, Leu176, and Asp177. The active-site Proton acceptor is the Thr179. AMP contacts are provided by Ser242 and His245. The N-linked (GlcNAc...) asparagine glycan is linked to Asn259. AMP is bound by residues Gly268 and Lys272. Position 300 (Asp300) interacts with Mg(2+).

It belongs to the inositol monophosphatase superfamily. Mg(2+) serves as cofactor. Contains N-linked glycan resistant to endoglycosydase H.

The protein localises to the golgi apparatus. It localises to the trans-Golgi network membrane. It catalyses the reaction adenosine 3',5'-bisphosphate + H2O = AMP + phosphate. Its pathway is sulfur metabolism. Its activity is regulated as follows. Strongly inhibited by lithium. In terms of biological role, exhibits 3'-nucleotidase activity toward adenosine 3',5'-bisphosphate (PAP), namely hydrolyzes adenosine 3',5'-bisphosphate into adenosine 5'-monophosphate (AMP) and a phosphate. May play a role in the formation of skeletal elements derived through endochondral ossification, possibly by clearing adenosine 3',5'-bisphosphate produced by Golgi sulfotransferases during glycosaminoglycan sulfation. Has no activity toward 3'-phosphoadenosine 5'-phosphosulfate (PAPS) or inositol phosphate (IP) substrates including I(1)P, I(1,4)P2, I(1,3,4)P3, I(1,4,5)P3 and I(1,3,4,5)P4. This Callithrix jacchus (White-tufted-ear marmoset) protein is Golgi-resident adenosine 3',5'-bisphosphate 3'-phosphatase (BPNT2).